We begin with the raw amino-acid sequence, 432 residues long: Adenylosuccinate synthetase (432 aa).

Residues 13–19 (GDEGKGK) and 41–43 (GHT) contribute to the GTP site. Catalysis depends on aspartate 14, which acts as the Proton acceptor. Mg(2+) is bound by residues aspartate 14 and glycine 41. IMP contacts are provided by residues 14 to 17 (DEGK), 39 to 42 (NAGH), threonine 130, arginine 144, glutamine 225, threonine 240, and arginine 304. Histidine 42 functions as the Proton donor in the catalytic mechanism. Position 300 to 306 (300 to 306 (AVTGRPR)) interacts with substrate. GTP contacts are provided by residues arginine 306, 332–334 (KLD), and 415–417 (STG).

The protein belongs to the adenylosuccinate synthetase family. Homodimer. Mg(2+) serves as cofactor.

It localises to the cytoplasm. It carries out the reaction IMP + L-aspartate + GTP = N(6)-(1,2-dicarboxyethyl)-AMP + GDP + phosphate + 2 H(+). Its pathway is purine metabolism; AMP biosynthesis via de novo pathway; AMP from IMP: step 1/2. In terms of biological role, plays an important role in the de novo pathway of purine nucleotide biosynthesis. Catalyzes the first committed step in the biosynthesis of AMP from IMP. The polypeptide is Adenylosuccinate synthetase (Haemophilus influenzae (strain PittEE)).